The sequence spans 102 residues: RNA-binding protein Hfq (102 aa).

The 60-residue stretch at 9–68 (DPFLNALRRERVPVSIYLVNGIKLQGQIESFDQFVILLKNTVSQMVYKHAISTVVPSRPV) folds into the Sm domain. Positions 63-102 (VPSRPVSHHSNNAGGGTSNNYHHGSNAQGSGAQQDSEETE) are disordered. Residues 70–96 (HHSNNAGGGTSNNYHHGSNAQGSGAQQ) show a composition bias toward polar residues.

It belongs to the Hfq family. As to quaternary structure, homohexamer.

In terms of biological role, RNA chaperone that binds small regulatory RNA (sRNAs) and mRNAs to facilitate mRNA translational regulation in response to envelope stress, environmental stress and changes in metabolite concentrations. Also binds with high specificity to tRNAs. The protein is RNA-binding protein Hfq of Salmonella arizonae (strain ATCC BAA-731 / CDC346-86 / RSK2980).